We begin with the raw amino-acid sequence, 308 residues long: Olfactory receptor 5H19 (308 aa).

The Extracellular segment spans residues 1-27 (MEKNATLLTEFVLTGLSHQPLWNIPLF). An N-linked (GlcNAc...) asparagine glycan is attached at N4. A helical membrane pass occupies residues 28–48 (LVFLVIYLITIVGNVSLITLI). The Cytoplasmic segment spans residues 49–55 (WTDPHLH). Residues 56–76 (IPMYLFLGSLAFVDTSISSIV) traverse the membrane as a helical segment. Residues 77–92 (VPKMLLNFFGKSKVIT) are Extracellular-facing. A helical transmembrane segment spans residues 93–113 (LSECMAQFFLFNISATTECFL). An intrachain disulfide couples C96 to C188. Topologically, residues 114–143 (LAAMAYDRYVAICKPLLYPVVMTNGLCVWL) are cytoplasmic. Residues 144-164 (IALSFVAGIIHALIHEGFLLR) traverse the membrane as a helical segment. The Extracellular segment spans residues 165 to 197 (LTFCNSNMIHNFYCDIISLLKISCTDTSLNYLI). A helical membrane pass occupies residues 198–218 (VFIFSGSIQVFTISTILVSYT). The Cytoplasmic portion of the chain corresponds to 219–238 (IILFTILKKKSAKGIKKAFS). The chain crosses the membrane as a helical span at residues 239–259 (TCGAHLLSVSLYYGPLLFMYV). At 260-270 (HPASSEVDDQD) the chain is on the extracellular side. Residues 271 to 291 (MIDSLFYTVIIPVLNPIIYSL) traverse the membrane as a helical segment. Topologically, residues 292 to 308 (RNKQVIDSLAKFLKRNV) are cytoplasmic.

It belongs to the G-protein coupled receptor 1 family.

The protein localises to the cell membrane. Functionally, potential odorant receptor. This is Olfactory receptor 5H19 from Mus musculus (Mouse).